Reading from the N-terminus, the 197-residue chain is Probable nicotinate-nucleotide adenylyltransferase (197 aa).

The protein belongs to the NadD family.

The catalysed reaction is nicotinate beta-D-ribonucleotide + ATP + H(+) = deamido-NAD(+) + diphosphate. It functions in the pathway cofactor biosynthesis; NAD(+) biosynthesis; deamido-NAD(+) from nicotinate D-ribonucleotide: step 1/1. Functionally, catalyzes the reversible adenylation of nicotinate mononucleotide (NaMN) to nicotinic acid adenine dinucleotide (NaAD). This Borrelia garinii subsp. bavariensis (strain ATCC BAA-2496 / DSM 23469 / PBi) (Borreliella bavariensis) protein is Probable nicotinate-nucleotide adenylyltransferase.